The sequence spans 547 residues: Solute carrier family 22 member 7 (547 aa).

12 consecutive transmembrane segments (helical) span residues 21-41, 145-165, 173-193, 203-223, 233-253, 258-278, 345-365, 374-396, 403-423, 431-451, 465-485, and 492-512; these read VALLALPRVLLPMHFLLPIFL, ATSTFFFAGVLVGAVAFGYLS, LLLVAYVSALVLGLVSAASVS, LTGTALAGFTIIVMPLELEWL, VLSSTFWTGGVMLLALVGYLI, WLLLAVTLPCAPGILSLWWVP, ISLCCMVVWFGVNFSYYGLSL, VYQTQLLFGAVELPSKLLVYLSV, LTLAGTLLGTSLSLGFRLLVS, TALAVLGKGFSEAAFTTAYLF, MGLTALVGRLGGSLAPLAALL, and LPKLAYGGIALLAACTALLLP. A disordered region spans residues 521-547; sequence ETIQDVERKSAPSSLQEEEMPMKQVQD.

The protein belongs to the major facilitator (TC 2.A.1) superfamily. Organic cation transporter (TC 2.A.1.19) family.

It is found in the basolateral cell membrane. It localises to the apical cell membrane. The protein localises to the cell membrane. The enzyme catalyses orotate(out) + L-glutamate(in) = orotate(in) + L-glutamate(out). The catalysed reaction is 3',5'-cyclic GMP(in) = 3',5'-cyclic GMP(out). It catalyses the reaction GMP(in) = GMP(out). It carries out the reaction 2'-deoxyguanosine(in) = 2'-deoxyguanosine(out). The enzyme catalyses GDP(in) = GDP(out). The catalysed reaction is guanosine(in) = guanosine(out). It catalyses the reaction GTP(in) = GTP(out). It carries out the reaction 3',5'-cyclic AMP(in) = 3',5'-cyclic AMP(out). The enzyme catalyses creatinine(in) = creatinine(out). The catalysed reaction is prostaglandin E2(out) = prostaglandin E2(in). It catalyses the reaction 2-oxoglutarate(in) = 2-oxoglutarate(out). It carries out the reaction glutarate(in) = glutarate(out). The enzyme catalyses urate(out) = urate(in). The catalysed reaction is estrone 3-sulfate(out) = estrone 3-sulfate(in). Functionally, functions as a Na(+)-independent bidirectional multispecific transporter. Contributes to the renal and hepatic elimination of endogenous organic compounds from the systemic circulation into the urine and bile, respectively. Capable of transporting a wide range of purine and pyrimidine nucleobases, nucleosides and nucleotides, with cGMP, 2'deoxyguanosine and GMP being the preferred substrates. Functions as a pH- and chloride-independent cGMP bidirectional facilitative transporter that can regulate both intracellular and extracellular levels of cGMP and may be involved in cGMP signaling pathways. Mediates orotate/glutamate bidirectional exchange and most likely display a physiological role in hepatic release of glutamate into the blood. Involved in renal secretion and possible reabsorption of creatinine. Able to uptake prostaglandin E2 (PGE2) and may contribute to PGE2 renal excretion. Also transports alpha-ketoglutarate and urate. Apart from the orotate/glutamate exchange, the counterions for the uptake of other SLC22A7/OAT2 substrates remain to be identified. The chain is Solute carrier family 22 member 7 (SLC22A7) from Sus scrofa (Pig).